The sequence spans 256 residues: H-2 class II histocompatibility antigen, A-D alpha chain (256 aa).

The N-terminal stretch at 1 to 23 (MPCSRALILGVLALNTMLSLCGG) is a signal peptide. Positions 24-111 (EDDIEADHVG…KRSNFTPATN (88 aa)) are alpha-1. At 24–218 (EDDIEADHVG…IPAPMSELTE (195 aa)) the chain is on the extracellular side. The tract at residues 112 to 205 (EAPQATVFPK…GLEEPVLKHW (94 aa)) is alpha-2. Positions 114–206 (PQATVFPKSP…LEEPVLKHWE (93 aa)) constitute an Ig-like C1-type domain. Cys134 and Cys190 are disulfide-bonded. Asn145 is a glycosylation site (N-linked (GlcNAc...) asparagine). The segment at 206–218 (EPEIPAPMSELTE) is connecting peptide. A helical transmembrane segment spans residues 219 to 244 (TVVCALGLSVGLVGIVVGTIFIIQGL). Topologically, residues 245-256 (RSGGTSRHPGPL) are cytoplasmic.

This sequence belongs to the MHC class II family.

The protein resides in the membrane. The sequence is that of H-2 class II histocompatibility antigen, A-D alpha chain (H2-Aa) from Mus musculus (Mouse).